The primary structure comprises 445 residues: Gamma-glutamyl phosphate reductase (445 aa).

It belongs to the gamma-glutamyl phosphate reductase family.

It localises to the cytoplasm. The enzyme catalyses L-glutamate 5-semialdehyde + phosphate + NADP(+) = L-glutamyl 5-phosphate + NADPH + H(+). The protein operates within amino-acid biosynthesis; L-proline biosynthesis; L-glutamate 5-semialdehyde from L-glutamate: step 2/2. In terms of biological role, catalyzes the NADPH-dependent reduction of L-glutamate 5-phosphate into L-glutamate 5-semialdehyde and phosphate. The product spontaneously undergoes cyclization to form 1-pyrroline-5-carboxylate. This is Gamma-glutamyl phosphate reductase from Synechococcus sp. (strain RCC307).